The primary structure comprises 110 residues: Putative UPF0377 protein YKL223W (110 aa).

Belongs to the UPF0377 family.

This Saccharomyces cerevisiae (strain ATCC 204508 / S288c) (Baker's yeast) protein is Putative UPF0377 protein YKL223W.